We begin with the raw amino-acid sequence, 169 residues long: Peptide deformylase (169 aa).

Positions 94 and 136 each coordinate Fe cation. E137 is an active-site residue. H140 serves as a coordination point for Fe cation.

It belongs to the polypeptide deformylase family. It depends on Fe(2+) as a cofactor.

It catalyses the reaction N-terminal N-formyl-L-methionyl-[peptide] + H2O = N-terminal L-methionyl-[peptide] + formate. Functionally, removes the formyl group from the N-terminal Met of newly synthesized proteins. Requires at least a dipeptide for an efficient rate of reaction. N-terminal L-methionine is a prerequisite for activity but the enzyme has broad specificity at other positions. This is Peptide deformylase from Desulfotalea psychrophila (strain LSv54 / DSM 12343).